The chain runs to 416 residues: Cytochrome P450 monooxygenase PikC (416 aa).

Substrate is bound by residues Glu94, 187–191 (AQTAM), and 238–246 (HILLVAGHE). Cys354 lines the heme pocket.

It belongs to the cytochrome P450 family. The cofactor is heme.

The enzyme catalyses narbomycin + 2 reduced [2Fe-2S]-[ferredoxin] + O2 + 2 H(+) = pikromycin + 2 oxidized [2Fe-2S]-[ferredoxin] + H2O. It carries out the reaction narbomycin + 2 reduced [2Fe-2S]-[ferredoxin] + O2 + 2 H(+) = neopikromycin + 2 oxidized [2Fe-2S]-[ferredoxin] + H2O. It catalyses the reaction narbomycin + 4 reduced [2Fe-2S]-[ferredoxin] + 2 O2 + 4 H(+) = novapikromycin + 4 oxidized [2Fe-2S]-[ferredoxin] + 2 H2O. The catalysed reaction is 10-deoxymethymycin + 2 reduced [2Fe-2S]-[ferredoxin] + O2 + 2 H(+) = methymycin + 2 oxidized [2Fe-2S]-[ferredoxin] + H2O. The enzyme catalyses 10-deoxymethymycin + 2 reduced [2Fe-2S]-[ferredoxin] + O2 + 2 H(+) = neomethymycin + 2 oxidized [2Fe-2S]-[ferredoxin] + H2O. It carries out the reaction 10-deoxymethymycin + 4 reduced [2Fe-2S]-[ferredoxin] + 2 O2 + 4 H(+) = novamethymycin + 4 oxidized [2Fe-2S]-[ferredoxin] + 2 H2O. It functions in the pathway antibiotic biosynthesis. Its function is as follows. Catalyzes the hydroxylation of narbomycin to give rise to pikromycin, and of 10-deoxymethymycin (YC-17) to give rise to methymycin and neomethymycin during macrolide antibiotic biosynthesis. In addition, produces low amounts of neopicromycin, novapikromycin and novamethymycin. Requires the participation of a ferredoxin and a ferredoxin reductase for the transfer of electrons from NADPH to the monooxygenase. The protein is Cytochrome P450 monooxygenase PikC of Streptomyces venezuelae.